A 311-amino-acid chain; its full sequence is uncharacterized protein (311 aa).

An N-terminal signal peptide occupies residues Met-1–Gly-13. The N-linked (GlcNAc...) asparagine glycan is linked to Asn-115.

The protein localises to the secreted. This is an uncharacterized protein from Encephalitozoon cuniculi (strain GB-M1) (Microsporidian parasite).